A 352-amino-acid polypeptide reads, in one-letter code: Protein-glutamate methylesterase/protein-glutamine glutaminase (352 aa).

A Response regulatory domain is found at 5-123; that stretch reads RILIVDDSVI…SKEKAIEYIR (119 aa). Asp56 bears the 4-aspartylphosphate mark. The CheB-type methylesterase domain occupies 166–352; it reads EIVAIGVSTG…LAEEIIRRIG (187 aa). Active-site residues include Ser173, His200, and Asp296.

This sequence belongs to the CheB family. Post-translationally, phosphorylated by CheA. Phosphorylation of the N-terminal regulatory domain activates the methylesterase activity.

It is found in the cytoplasm. The enzyme catalyses [protein]-L-glutamate 5-O-methyl ester + H2O = L-glutamyl-[protein] + methanol + H(+). The catalysed reaction is L-glutaminyl-[protein] + H2O = L-glutamyl-[protein] + NH4(+). Functionally, involved in chemotaxis. Part of a chemotaxis signal transduction system that modulates chemotaxis in response to various stimuli. Catalyzes the demethylation of specific methylglutamate residues introduced into the chemoreceptors (methyl-accepting chemotaxis proteins or MCP) by CheR. Also mediates the irreversible deamidation of specific glutamine residues to glutamic acid. In Trichodesmium erythraeum (strain IMS101), this protein is Protein-glutamate methylesterase/protein-glutamine glutaminase.